A 308-amino-acid chain; its full sequence is ATP synthase gamma chain (308 aa).

It belongs to the ATPase gamma chain family. In terms of assembly, F-type ATPases have 2 components, CF(1) - the catalytic core - and CF(0) - the membrane proton channel. CF(1) has five subunits: alpha(3), beta(3), gamma(1), delta(1), epsilon(1). CF(0) has three main subunits: a, b and c.

The protein resides in the cell membrane. Produces ATP from ADP in the presence of a proton gradient across the membrane. The gamma chain is believed to be important in regulating ATPase activity and the flow of protons through the CF(0) complex. This is ATP synthase gamma chain from Lacticaseibacillus casei (strain BL23) (Lactobacillus casei).